The primary structure comprises 528 residues: Protein spinster homolog 1 (528 aa).

The disordered stretch occupies residues 1 to 38 (MAGSDTAPFLSQADDPDDGPAPGHPGLPGPMGNPKSGE). Ala2 carries the N-acetylalanine modification. Transmembrane regions (helical) follow at residues 60–80 (LIVV…FTVA), 98–118 (GLIQ…FGYL), 126–146 (YLMC…SFIP), 160–180 (VGVG…DLFV), 187–207 (MLSI…IAGS), 218–238 (WALR…FLVV), 278–298 (LGFT…PAFL), 323–343 (LIFG…GVEI), 357–377 (LVCA…LACA), 381–401 (IVAT…NWAI), 421–441 (FQIV…IGLI), and 465–485 (MLCA…AMFI). Ser518 bears the Phosphoserine mark.

The protein belongs to the major facilitator superfamily. Spinster (TC 2.A.1.49) family. In terms of assembly, interacts with BCL2 and BCL2L1. Expressed in liver (at mRNA and protein levels).

It localises to the lysosome membrane. The enzyme catalyses a 1-acyl-sn-glycero-3-phosphocholine(out) + H(+)(out) = a 1-acyl-sn-glycero-3-phosphocholine(in) + H(+)(in). The catalysed reaction is 1-hexadecanoyl-sn-glycero-3-phosphocholine(out) + H(+)(out) = 1-hexadecanoyl-sn-glycero-3-phosphocholine(in) + H(+)(in). It catalyses the reaction 1-(9Z-octadecenoyl)-sn-glycero-3-phosphocholine(out) + H(+)(out) = 1-(9Z-octadecenoyl)-sn-glycero-3-phosphocholine(in) + H(+)(in). It carries out the reaction 1-(5Z,8Z,11Z,14Z-eicosatetraenoyl)-sn-glycero-3-phosphocholine(out) + H(+)(out) = 1-(5Z,8Z,11Z,14Z-eicosatetraenoyl)-sn-glycero-3-phosphocholine(in) + H(+)(in). The enzyme catalyses 1-(4Z,7Z,10Z,13Z,16Z,19Z-docosahexaenoyl)-sn-glycero-3-phosphocholine(out) + H(+)(out) = 1-(4Z,7Z,10Z,13Z,16Z,19Z-docosahexaenoyl)-sn-glycero-3-phosphocholine(in) + H(+)(in). The catalysed reaction is a 1-acyl-sn-glycero-3-phosphoethanolamine(out) + H(+)(out) = a 1-acyl-sn-glycero-3-phosphoethanolamine(in) + H(+)(in). It catalyses the reaction 1-(9Z-octadecenoyl)-sn-glycero-3-phosphoethanolamine(out) + H(+)(out) = 1-(9Z-octadecenoyl)-sn-glycero-3-phosphoethanolamine(in) + H(+)(in). It carries out the reaction 1-acyl-sn-glycero-3-phospho-(1'-sn-glycerol)(out) + H(+)(out) = 1-acyl-sn-glycero-3-phospho-(1'-sn-glycerol)(in) + H(+)(in). The enzyme catalyses 1-(9Z-octadecenoyl)-sn-glycero-3-phospho-(1'-sn-glycerol)(out) + H(+)(out) = 1-(9Z-octadecenoyl)-sn-glycero-3-phospho-(1'-sn-glycerol)(in) + H(+)(in). The catalysed reaction is a 1-O-(1Z-alkenyl)-sn-glycero-3-phosphocholine(out) + H(+)(out) = a 1-O-(1Z-alkenyl)-sn-glycero-3-phosphocholine(in) + H(+)(in). It catalyses the reaction 1-(1Z-hexadecenyl)-sn-glycero-3-phosphocholine(out) + H(+)(out) = 1-(1Z-hexadecenyl)-sn-glycero-3-phosphocholine(in) + H(+)(in). It carries out the reaction a 1-O-(1Z-alkenyl)-sn-glycero-3-phosphoethanolamine(out) + H(+)(out) = a 1-O-(1Z-alkenyl)-sn-glycero-3-phosphoethanolamine(in) + H(+)(in). The enzyme catalyses 1-O-(1Z-hexadecenyl)-sn-glycero-3-phosphoethanolamine(out) + H(+)(out) = 1-O-(1Z-hexadecenyl)-sn-glycero-3-phosphoethanolamine(in) + H(+)(in). Functionally, plays a critical role in the phospholipid salvage pathway from lysosomes to the cytosol. Mediates the rate-limiting, proton-dependent, lysosomal efflux of lysophospholipids, which can then be reacylated by acyltransferases in the endoplasmic reticulum to form phospholipids. Selective for zwitterionic headgroups such as lysophosphatidylcholine (LPC) and lysophosphatidylethanolamine (LPE), can also transport lysophosphatidylglycerol (LPG), but not other anionic lysophospholipids, sphingosine, nor sphingomyelin. Transports lysophospholipids with saturated, monounsaturated, and polyunsaturated fatty acids, such as 1-hexadecanoyl-sn-glycero-3-phosphocholine, 1-(9Z-octadecenoyl)-sn-glycero-3-phosphocholine and 1-(4Z,7Z,10Z,13Z,16Z,19Z-docosahexaenoyl)-sn-glycero-3-phosphocholine, respectively. Can also transport lysoplasmalogen (LPC with a fatty alcohol) such as 1-(1Z-hexadecenyl)-sn-glycero-3-phosphocholine. Essential player in lysosomal homeostasis. Crucial for cell survival under conditions of nutrient limitation. May be involved in necrotic or autophagic cell death. The chain is Protein spinster homolog 1 (Spns1) from Mus musculus (Mouse).